Here is a 154-residue protein sequence, read N- to C-terminus: MKKEQLVADLEALCAPIVKEKGYDLYHIEYVKENNEYYLRLYIEKPEERISLRDCEIVSRALSDMLDIEDPIKDAYFLEVSSPGLNRRLHSDEHFNRFIGKEIFVGFKSSLSGRKNVKGILKDVQENEIIVECEGNEIKVPKDKIKTANLEGEI.

The protein belongs to the RimP family.

It is found in the cytoplasm. Its function is as follows. Required for maturation of 30S ribosomal subunits. The polypeptide is Ribosome maturation factor RimP (Clostridium perfringens (strain SM101 / Type A)).